Here is a 309-residue protein sequence, read N- to C-terminus: NAD kinase (309 aa).

Asp-89 (proton acceptor) is an active-site residue. NAD(+)-binding positions include 89–90 (DG), 163–164 (NE), His-174, Arg-191, Asp-193, and 204–209 (TAYALS).

Belongs to the NAD kinase family. A divalent metal cation is required as a cofactor.

Its subcellular location is the cytoplasm. It catalyses the reaction NAD(+) + ATP = ADP + NADP(+) + H(+). Its function is as follows. Involved in the regulation of the intracellular balance of NAD and NADP, and is a key enzyme in the biosynthesis of NADP. Catalyzes specifically the phosphorylation on 2'-hydroxyl of the adenosine moiety of NAD to yield NADP. The polypeptide is NAD kinase (Shewanella baltica (strain OS185)).